The sequence spans 689 residues: Methionine--tRNA ligase (689 aa).

The 'HIGH' region signature appears at 15-25 (PYANGPIHLGH). Zn(2+) contacts are provided by C146, C149, C159, and C162. The 'KMSKS' region signature appears at 332-336 (KMSKS). K335 is an ATP binding site. Positions 546–577 (KDNLQPTEAPKADKKADKKVEKKATTGDPLTD) are disordered. Residues 555–570 (PKADKKADKKVEKKAT) show a composition bias toward basic and acidic residues. The 102-residue stretch at 588–689 (DFAKLDLRIA…QGAKPGMRVK (102 aa)) folds into the tRNA-binding domain.

It belongs to the class-I aminoacyl-tRNA synthetase family. MetG type 1 subfamily. As to quaternary structure, homodimer. It depends on Zn(2+) as a cofactor.

The protein localises to the cytoplasm. It carries out the reaction tRNA(Met) + L-methionine + ATP = L-methionyl-tRNA(Met) + AMP + diphosphate. Functionally, is required not only for elongation of protein synthesis but also for the initiation of all mRNA translation through initiator tRNA(fMet) aminoacylation. The chain is Methionine--tRNA ligase from Shewanella denitrificans (strain OS217 / ATCC BAA-1090 / DSM 15013).